Reading from the N-terminus, the 363-residue chain is MEVGVFIPIGNNGWLLSENAPQYKPSFDLNKAITLKAEQYGFDFALSMIKLRGFGGKTEFWDYNLESFTLMAGLAAVTSKIKLFGTAATLVMPPAIVARMATTIDSISGGRFGINLITGWQRPEYSQMGLWPGDDYFGDRYEYLGEYTSVLKELLTEGQSDFKGKFFQMDDCRMKPVPQGDVKLICAGSSNSGMAFSAKFADYSFCFGVGVNTPKAFAPTNERLLAATEKSGREVKSVVLTMVLAEEKSEDAWAKWEHYKAGADEDAIKWLGLQSAVDTKSGSDTNVRHMSNPVSAVNINMGTLIGSYEEVAAMLDEMSEVPGTGGVMLTFDDFLEGVEKFGKYVQPLMKSRQHVLAELEAAE.

FMN-binding positions include 49–50 (IK), N115, E124, 140–141 (RY), and S190.

Belongs to the NtaA/SnaA/DszA monooxygenase family. RutA subfamily.

The catalysed reaction is uracil + FMNH2 + NADH + O2 = (Z)-3-ureidoacrylate + FMN + NAD(+) + H2O + H(+). The enzyme catalyses thymine + FMNH2 + NADH + O2 = (Z)-2-methylureidoacrylate + FMN + NAD(+) + H2O + H(+). Its function is as follows. Catalyzes the pyrimidine ring opening between N-3 and C-4 by an unusual flavin hydroperoxide-catalyzed mechanism, adding oxygen atoms in the process to yield ureidoacrylate peracid, that immediately reacts with FMN forming ureidoacrylate and FMN-N(5)-oxide. The FMN-N(5)-oxide reacts spontaneously with NADH to produce FMN. Requires the flavin reductase RutF to regenerate FMN in vivo. The polypeptide is Pyrimidine monooxygenase RutA (rutA) (Agrobacterium fabrum (strain C58 / ATCC 33970) (Agrobacterium tumefaciens (strain C58))).